We begin with the raw amino-acid sequence, 71 residues long: Long neurotoxin 2 (71 aa).

Cystine bridges form between Cys3–Cys20, Cys14–Cys41, Cys26–Cys30, Cys45–Cys56, and Cys57–Cys62.

Belongs to the three-finger toxin family. Long-chain subfamily. Type II alpha-neurotoxin sub-subfamily. In terms of tissue distribution, expressed by the venom gland.

The protein resides in the secreted. In terms of biological role, binds with high affinity to muscular (alpha-1/CHRNA1) and neuronal (alpha-7/CHRNA7) nicotinic acetylcholine receptor (nAChR) and inhibits acetylcholine from binding to the receptor, thereby impairing neuromuscular and neuronal transmission. In Naja naja (Indian cobra), this protein is Long neurotoxin 2.